A 248-amino-acid polypeptide reads, in one-letter code: mRNA-decapping protein OPG122 (248 aa).

One can recognise a Nudix hydrolase domain in the interval 45–227; it reads HKRVSVSAIL…IAKYALDTAK (183 aa). The short motif at 125 to 147 is the Nudix box element; the sequence is GGIPKRGENVPECLSREIKEEVN.

This sequence belongs to the Nudix hydrolase family. As to quaternary structure, interacts with the late transcription elongation factor VLTF-4/OPG110. Interacts with the late transcription factors VLTF-1. The cofactor is Mg(2+). Mn(2+) serves as cofactor.

The protein resides in the host mitochondrion. In terms of biological role, acts with RNA polymerase to initiate transcription from late gene promoters. The sequence is that of mRNA-decapping protein OPG122 (OPG122) from Cynomys gunnisoni (Gunnison's prairie dog).